The sequence spans 184 residues: Large ribosomal subunit protein uL5 (184 aa).

The protein belongs to the universal ribosomal protein uL5 family. Part of the 50S ribosomal subunit; part of the 5S rRNA/L5/L18/L25 subcomplex. Contacts the 5S rRNA and the P site tRNA. Forms a bridge to the 30S subunit in the 70S ribosome.

In terms of biological role, this is one of the proteins that bind and probably mediate the attachment of the 5S RNA into the large ribosomal subunit, where it forms part of the central protuberance. In the 70S ribosome it contacts protein S13 of the 30S subunit (bridge B1b), connecting the 2 subunits; this bridge is implicated in subunit movement. Contacts the P site tRNA; the 5S rRNA and some of its associated proteins might help stabilize positioning of ribosome-bound tRNAs. The protein is Large ribosomal subunit protein uL5 of Syntrophotalea carbinolica (strain DSM 2380 / NBRC 103641 / GraBd1) (Pelobacter carbinolicus).